The primary structure comprises 524 residues: Protein-export membrane protein SecD (524 aa).

6 helical membrane passes run 10-30 (VIFL…PTMG), 366-386 (KFDS…VVFI), 389-409 (GKPQ…YILL), 420-442 (DLSV…IIIA), 465-485 (FWVI…LAVL), and 487-507 (LGDL…GVLV).

Belongs to the SecD/SecF family. SecD subfamily. As to quaternary structure, part of the protein translocation apparatus. Forms a homodimer and complexes with SecF.

Its subcellular location is the cell membrane. Functionally, involved in protein export. This chain is Protein-export membrane protein SecD, found in Haloferax volcanii (strain ATCC 29605 / DSM 3757 / JCM 8879 / NBRC 14742 / NCIMB 2012 / VKM B-1768 / DS2) (Halobacterium volcanii).